The sequence spans 86 residues: Putative regulatory protein Dvul_2085 (86 aa).

The protein belongs to the RemA family.

The chain is Putative regulatory protein Dvul_2085 from Nitratidesulfovibrio vulgaris (strain DP4) (Desulfovibrio vulgaris).